The primary structure comprises 185 residues: Elongation factor P (185 aa).

Belongs to the elongation factor P family.

The protein resides in the cytoplasm. It functions in the pathway protein biosynthesis; polypeptide chain elongation. Functionally, involved in peptide bond synthesis. Stimulates efficient translation and peptide-bond synthesis on native or reconstituted 70S ribosomes in vitro. Probably functions indirectly by altering the affinity of the ribosome for aminoacyl-tRNA, thus increasing their reactivity as acceptors for peptidyl transferase. In Nitratidesulfovibrio vulgaris (strain DSM 19637 / Miyazaki F) (Desulfovibrio vulgaris), this protein is Elongation factor P.